The chain runs to 568 residues: MATNLTLETDKEIKNMNQLSMIDTTITRPLANYHSSVWKNYFLSYTPQLTEISSQEKLELEELKEKVRQMLVETSDKSTQKLVLIDTIQRLGVAYHFDNEIKISIQNIFDEFEQNKNEDDNDLYIVALRFRLVRGQRHYMSSDVFKKFTNDDGKFKETLTKDVQGLLNLYEATHLRVHGEQILEEALSFTVTHLKSMSPKLDSSLKAQVSEALIQPIYTNVPRVVAPKYIRIYENIESHDDLLLKFVKLDFHILQKMHQRELSELTRWWKDLDHSNKYPYARDKLVECYFWATGVYFGPQYKRARRMITKLIVIITITDDLYDAYATYDELVPYTNAVERCEISAMDSISPYMRPLYQVFLDYFDEMEEELTKDGKAHYVYYAKVEMNKLIKSYLKEAEWLKNDIIPKCEEYKRNATITVANQMILITCLIVAGEFISKETFEWMINESLIAPASSLINRLKDDIIGHEHEQQREHGASFVECYVKEYRASKQEAYVEARRQIANAWKDINTDYLHATQVPTFVLQPALNLSRLVDILQEDDFTDSQNFLKDTIKLLFVDSVNSTSCG.

Asp-319, Asp-323, Asp-463, and Glu-471 together coordinate Mg(2+). A DDXXD motif motif is present at residues 319–323; it reads DDLYD.

It belongs to the terpene synthase family. Tpsa subfamily. It depends on Mg(2+) as a cofactor. Mn(2+) serves as cofactor. As to expression, mostly expressed in roots, to a lower extent in flowers and, at low levels, in fruits.

The catalysed reaction is (2Z,6Z)-farnesyl diphosphate = (E)-alpha-bisabolene + diphosphate. The enzyme catalyses (2Z,6Z)-farnesyl diphosphate = beta-bisabolene + diphosphate. It catalyses the reaction (2E,6E)-farnesyl diphosphate = beta-bisabolene + diphosphate. It carries out the reaction (2E,6E)-farnesyl diphosphate = (Z)-gamma-bisabolene + diphosphate. The catalysed reaction is (2E,6E)-farnesyl diphosphate = (E)-gamma-bisabolene + diphosphate. The enzyme catalyses (2Z,6Z)-farnesyl diphosphate = (E)-gamma-bisabolene + diphosphate. It participates in secondary metabolite biosynthesis; terpenoid biosynthesis. Its function is as follows. Sesquiterpene synthase involved in the biosynthesis of volatile compounds. Mediates the conversion of (2E,6E)-farnesyl diphosphate ((EE)-FPP) into beta-bisabolene, and of (2Z,6Z)-farnesyl diphosphate ((ZZ)-FPP) into alpha-bisabolene, but also smaller amounts of (Z)-gamma-bisabolene, (E)-gamma-bisabolene and nerolidol. This chain is Sesquiterpene synthase 14, found in Solanum lycopersicum (Tomato).